Consider the following 162-residue polypeptide: Small ribosomal subunit protein uS9 (162 aa).

The protein belongs to the universal ribosomal protein uS9 family.

The sequence is that of Small ribosomal subunit protein uS9 from Parvibaculum lavamentivorans (strain DS-1 / DSM 13023 / NCIMB 13966).